The primary structure comprises 1658 residues: Collagen alpha-1(XXVII) chain B (1658 aa).

Positions 1 to 38 (MEPDNTPSSRLRAAGVGGRAVFFCMVLYCTCCLRLAQA) are cleaved as a signal peptide. Residues 66–229 (GVILTTRARI…NYCKYIKKQC (164 aa)) enclose the Laminin G-like domain. Polar residues predominate over residues 308–323 (SIRNRTSQISPKPTQQ). Disordered regions lie at residues 308-332 (SIRN…KKER), 345-364 (VTDS…TTTT), 427-550 (GLKG…GNMG), 571-614 (GERG…APGP), 637-1332 (GPKG…DAGE), and 1377-1415 (IIGP…GPPG). A triple-helical region region spans residues 424 to 1417 (ELTGLKGEPG…RGPPGPPGLP (994 aa)). 7 Collagen-like domains span residues 425–478 (LTGL…GNPG), 493–552 (GLVG…MGPK), 556–615 (GFIG…PGPV), 622–681 (GDMG…PGLP), 685–744 (GKPG…PGLE), 748–807 (GPVG…MGLA), and 811–870 (GDRG…RGPD). Pro residues predominate over residues 434–444 (LPGPPGPPGQP). The segment covering 491–506 (DPGLVGLPGQPGQPGR) has biased composition (low complexity). Low complexity-rich tracts occupy residues 657-666 (LGLPGEPGEP) and 678-692 (PGLP…PQGK). Positions 733-742 (GIPGPGGLPG) are enriched in gly residues. Composition is skewed to low complexity over residues 837–852 (RGLS…HGSR) and 875–890 (EKGM…PPGK). 8 consecutive Collagen-like domains span residues 892-951 (GLSG…IGLP), 952-1011 (GKAG…VGLE), 1024-1083 (GTEG…IGPK), 1084-1137 (GSRG…DGKV), 1139-1198 (GPPG…KGSK), 1199-1258 (GNKG…PGDL), 1268-1327 (GKPG…KGQP), and 1361-1420 (GPQG…PAVA). Residues 1040–1058 (PEGKPGKIGERGKPGEKGS) are compositionally biased toward basic and acidic residues. Low complexity predominate over residues 1112 to 1124 (HQGPQGSLGSPGP). Basic and acidic residues predominate over residues 1125 to 1137 (KGEKGEQGDDGKV). Low complexity predominate over residues 1215–1230 (NRGSPGPVGVPGPRGV). Over residues 1307–1316 (GLNGGMGFPG) the composition is skewed to gly residues. The segment covering 1402–1415 (RGPPGPRGPPGPPG) has biased composition (pro residues). A propeptide spans 1421–1658 (FSHENEALGA…HLEVGPVCFL (238 aa)) (C-terminal propeptide). The 201-residue stretch at 1458 to 1658 (SEIFKTLHYL…HLEVGPVCFL (201 aa)) folds into the Fibrillar collagen NC1 domain. Cystine bridges form between cysteine 1488/cysteine 1520, cysteine 1529/cysteine 1656, and cysteine 1565/cysteine 1609. Ca(2+)-binding residues include aspartate 1506, asparagine 1508, cysteine 1511, and aspartate 1514. A glycan (N-linked (GlcNAc...) asparagine) is linked at asparagine 1567.

The protein belongs to the fibrillar collagen family. In terms of tissue distribution, weakly expressed in the notochord from the 6 somite stage. Expressed throughout the notochord at 13 somites, then becomes restricted to the distal tip of the notochord by 24 hpf. Also expressed in head cartilages by 48 hpf.

The protein resides in the secreted. Its subcellular location is the extracellular space. It is found in the extracellular matrix. In terms of biological role, may play a role during the calcification of cartilage and the transition of cartilage to bone. Together with col27a1a, plays a role in development of the notochord and axial skeleton. This Danio rerio (Zebrafish) protein is Collagen alpha-1(XXVII) chain B (col27a1b).